A 145-amino-acid chain; its full sequence is UPF0735 ACT domain-containing protein CLL_A2896 (145 aa).

An ACT domain is found at 69–144 (TFNLIVKDQT…YVEKIEFVAM (76 aa)).

It belongs to the UPF0735 family.

This Clostridium botulinum (strain Eklund 17B / Type B) protein is UPF0735 ACT domain-containing protein CLL_A2896.